Here is a 313-residue protein sequence, read N- to C-terminus: uncharacterized protein (313 aa).

The next 9 helical transmembrane spans lie at 31–53 (AWGIGVIFPLYSLHALVLGGWLF), 62–84 (LFLFGCVFGMYEAYITKVLWNPY), 104–126 (VFFWHPIFAFILPLLIAEYIYTS), 147–161 (FALLLAALAGLNQSV), 166–185 (SMFWVALLSFFTILTPSFLL), 198–220 (RVLKLLTFALIILYLFWTFALRF), 225–244 (SFSGQLVVWLFYLLLFYLII), 264–282 (FFAACFLVYLTAFLITSSF), and 286–308 (PAAMLFLLAGTAYGTIVFASILI).

It localises to the cell membrane. This is an uncharacterized protein from Archaeoglobus fulgidus (strain ATCC 49558 / DSM 4304 / JCM 9628 / NBRC 100126 / VC-16).